The chain runs to 141 residues: MAALRQVAFYGKGGIGNSKRKPELVTASIEDRSAGSPSKNKMHFQSRMNVAASMRGGDGLPPSVRCRLHLEDGTTRGERKERTRLAATFQSVSEERPRLHMPRRVTTTHTTLFVTFVGFTTPIVPSTVWSISRSNHLKQSN.

It to the N-terminal of nitrogenase iron protein (NifH). Has lost the ATP-binding site.

Responsible for the nodulation efficiency and competitive ability of strain GR4 on alfalfa roots. This Rhizobium meliloti (Ensifer meliloti) protein is Protein nfe1 (nfe1).